A 234-amino-acid polypeptide reads, in one-letter code: Probable pectate lyase F (234 aa).

The first 17 residues, 1–17, serve as a signal peptide directing secretion; sequence MFSRIALLPAFLPVALA. N-linked (GlcNAc...) asparagine glycosylation is found at Asn168 and Asn194.

This sequence belongs to the polysaccharide lyase 3 family. Ca(2+) serves as cofactor.

The protein resides in the secreted. It carries out the reaction Eliminative cleavage of (1-&gt;4)-alpha-D-galacturonan to give oligosaccharides with 4-deoxy-alpha-D-galact-4-enuronosyl groups at their non-reducing ends.. In terms of biological role, pectinolytic enzyme consist of four classes of enzymes: pectin lyase, polygalacturonase, pectin methylesterase and rhamnogalacturonase. Among pectinolytic enzymes, pectin lyase is the most important in depolymerization of pectin, since it cleaves internal glycosidic bonds of highly methylated pectins. Favors pectate, the anion, over pectin, the methyl ester. The polypeptide is Probable pectate lyase F (plyF) (Aspergillus flavus (strain ATCC 200026 / FGSC A1120 / IAM 13836 / NRRL 3357 / JCM 12722 / SRRC 167)).